Consider the following 179-residue polypeptide: Acireductone dioxygenase (179 aa).

Positions 100, 102, 106, and 145 each coordinate Fe(2+). 4 residues coordinate Ni(2+): His-100, His-102, Glu-106, and His-145.

It belongs to the acireductone dioxygenase (ARD) family. In terms of assembly, monomer. Fe(2+) serves as cofactor. The cofactor is Ni(2+).

It catalyses the reaction 1,2-dihydroxy-5-(methylsulfanyl)pent-1-en-3-one + O2 = 3-(methylsulfanyl)propanoate + CO + formate + 2 H(+). The enzyme catalyses 1,2-dihydroxy-5-(methylsulfanyl)pent-1-en-3-one + O2 = 4-methylsulfanyl-2-oxobutanoate + formate + 2 H(+). The protein operates within amino-acid biosynthesis; L-methionine biosynthesis via salvage pathway; L-methionine from S-methyl-5-thio-alpha-D-ribose 1-phosphate: step 5/6. Its function is as follows. Catalyzes 2 different reactions between oxygen and the acireductone 1,2-dihydroxy-3-keto-5-methylthiopentene (DHK-MTPene) depending upon the metal bound in the active site. Fe-containing acireductone dioxygenase (Fe-ARD) produces formate and 2-keto-4-methylthiobutyrate (KMTB), the alpha-ketoacid precursor of methionine in the methionine recycle pathway. Ni-containing acireductone dioxygenase (Ni-ARD) produces methylthiopropionate, carbon monoxide and formate, and does not lie on the methionine recycle pathway. This Bacillus licheniformis (strain ATCC 14580 / DSM 13 / JCM 2505 / CCUG 7422 / NBRC 12200 / NCIMB 9375 / NCTC 10341 / NRRL NRS-1264 / Gibson 46) protein is Acireductone dioxygenase.